A 197-amino-acid polypeptide reads, in one-letter code: HTH-type transcriptional regulator BetI (197 aa).

One can recognise an HTH tetR-type domain in the interval Pro-8–Leu-68. A DNA-binding region (H-T-H motif) is located at residues Ser-31–Phe-50.

The protein operates within amine and polyamine biosynthesis; betaine biosynthesis via choline pathway [regulation]. In terms of biological role, repressor involved in the biosynthesis of the osmoprotectant glycine betaine. It represses transcription of the choline transporter BetT and the genes of BetAB involved in the synthesis of glycine betaine. This chain is HTH-type transcriptional regulator BetI, found in Pseudomonas aeruginosa (strain LESB58).